Reading from the N-terminus, the 188-residue chain is Probable DNA-directed RNA polymerase subunit delta (188 aa).

Residues 14-83 enclose the HTH HARE-type domain; it reads LSMIEVARAI…GDNKWGLRSW (70 aa). Residues 117-188 form a disordered region; it reads GDEDAIDYSD…EDDEDDEEEE (72 aa).

This sequence belongs to the RpoE family. In terms of assembly, RNAP is composed of a core of 2 alpha, a beta and a beta' subunits. The core is associated with a delta subunit and one of several sigma factors.

Functionally, participates in both the initiation and recycling phases of transcription. In the presence of the delta subunit, RNAP displays an increased specificity of transcription, a decreased affinity for nucleic acids, and an increased efficiency of RNA synthesis because of enhanced recycling. The sequence is that of Probable DNA-directed RNA polymerase subunit delta from Streptococcus uberis (strain ATCC BAA-854 / 0140J).